Consider the following 165-residue polypeptide: Protein FAM219A (165 aa).

Met-1 carries the post-translational modification N-acetylmethionine. The segment at 1 to 114 (MMEEIDRFQV…SRYSSSGYSS (114 aa)) is disordered. Residues 32-44 (CDAREEKQRELAR) are compositionally biased toward basic and acidic residues. Over residues 49–63 (KNGSMGSPVNQQPKK) the composition is skewed to polar residues. Ser-55 and Ser-85 each carry phosphoserine. The residue at position 96 (Thr-96) is a Phosphothreonine. Residues Ser-98 and Ser-105 each carry the phosphoserine modification. Over residues 105 to 114 (SRYSSSGYSS) the composition is skewed to low complexity.

This sequence belongs to the FAM219 family.

The polypeptide is Protein FAM219A (FAM219A) (Macaca fascicularis (Crab-eating macaque)).